The primary structure comprises 155 residues: Alanine- and arginine-rich domain-containing protein (155 aa).

The polypeptide is Alanine- and arginine-rich domain-containing protein (AARD) (Homo sapiens (Human)).